The following is a 237-amino-acid chain: Ribonuclease PH (237 aa).

Phosphate contacts are provided by residues Arg-86 and 124–126 (GTR).

This sequence belongs to the RNase PH family. As to quaternary structure, homohexameric ring arranged as a trimer of dimers.

The enzyme catalyses tRNA(n+1) + phosphate = tRNA(n) + a ribonucleoside 5'-diphosphate. Its function is as follows. Phosphorolytic 3'-5' exoribonuclease that plays an important role in tRNA 3'-end maturation. Removes nucleotide residues following the 3'-CCA terminus of tRNAs; can also add nucleotides to the ends of RNA molecules by using nucleoside diphosphates as substrates, but this may not be physiologically important. Probably plays a role in initiation of 16S rRNA degradation (leading to ribosome degradation) during starvation. This is Ribonuclease PH from Pseudoalteromonas translucida (strain TAC 125).